A 502-amino-acid chain; its full sequence is Probable glycine dehydrogenase (decarboxylating) subunit 2 (502 aa).

Lysine 273 bears the N6-(pyridoxal phosphate)lysine mark.

Belongs to the GcvP family. C-terminal subunit subfamily. The glycine cleavage system is composed of four proteins: P, T, L and H. In this organism, the P 'protein' is a heterodimer of two subunits. Pyridoxal 5'-phosphate serves as cofactor.

It carries out the reaction N(6)-[(R)-lipoyl]-L-lysyl-[glycine-cleavage complex H protein] + glycine + H(+) = N(6)-[(R)-S(8)-aminomethyldihydrolipoyl]-L-lysyl-[glycine-cleavage complex H protein] + CO2. Its function is as follows. The glycine cleavage system catalyzes the degradation of glycine. The P protein binds the alpha-amino group of glycine through its pyridoxal phosphate cofactor; CO(2) is released and the remaining methylamine moiety is then transferred to the lipoamide cofactor of the H protein. This chain is Probable glycine dehydrogenase (decarboxylating) subunit 2, found in Pyrococcus horikoshii (strain ATCC 700860 / DSM 12428 / JCM 9974 / NBRC 100139 / OT-3).